Reading from the N-terminus, the 298-residue chain is uncharacterized protein (298 aa).

The next 8 helical transmembrane spans lie at 5 to 25, 52 to 72, 105 to 125, 138 to 158, 163 to 183, 208 to 228, 236 to 256, and 273 to 293; these read SLAT…FLLW, VISG…FLAL, LFLL…QVLV, IFWG…LLML, IQGG…NDIA, GLMG…PLLT, LLAG…MSAI, and GGLL…FYFI.

It belongs to the CDS family.

Its subcellular location is the cell membrane. This is an uncharacterized protein from Escherichia coli (strain K12).